Reading from the N-terminus, the 139-residue chain is Early placenta insulin-like peptide (139 aa).

The N-terminal stretch at Met-1 to Ala-25 is a signal peptide. 3 disulfides stabilise this stretch: Cys-31-Cys-125, Cys-43-Cys-138, and Cys-124-Cys-129. Positions Leu-59–Arg-114 are cleaved as a propeptide — c peptide.

The protein belongs to the insulin family. As to expression, expressed in placenta, uterus and in fetal perichondrium. Expression levels were increased in both early placentas and molar pregnancies and were reduced in choriocarcinoma cells.

The protein resides in the secreted. In terms of biological role, may play an important role in trophoblast development and in the regulation of bone formation. The sequence is that of Early placenta insulin-like peptide (INSL4) from Homo sapiens (Human).